A 644-amino-acid chain; its full sequence is MKRKTAEVKGEKERNSKQISLEEDKIKGMFNPKIWDKTFQDGLKKEIEDSQPYNWGTIHELVNDDLLRAVRKEIETEIHFTKKETDIYRVNQSGDLANLSGLDWDDLSRLPNLFKLRQILYSKQYRDFFGYVTKAGKLSGSKTDMSINTYTKGCHLLTHDDVIGSRRISFILYLPDPDRKWKSHYGGGLRLFPSILPNVPHSDPSAKLVPQFNQIAFFKVLPGFSFHDVEEVKVDKHRLSIQGWYHIPQVGEEGYIPGEEEAWVRNNTSTLAQIESNVLEDFEFPKDERNILSFHEVKHFEKMLKGDAGAKTDNTPKESMTSVISDSVKLSEAEFTYLSQYISPEHLSSKGIEKLQKQFVENSSLQIESFLNDDKSELLKKVIKQKELEQECPYHSKDVKAPWKTAIPPHKARYLYIDGKEYRNFQTEADILEALNNNDLPNFQFTKDAIKIISDASGNSRENNFDAELALIDLAVFHKSTIFKKYLALLTSLCPVSEQILIRRFRPGMDFTLATKCRFNELLKSNPDIIDAVLEGTLCLTPSAGWESGELGGYELYMMDDDEDNKQYLKEDVEDASVYRADDSGDSVLINDPPAWNTFNLVLRDESVLEFVKYVSWSAKSSRWDVKMKWDVKSCDEDGQEDEA.

The region spanning 141-247 (SKTDMSINTY…RLSIQGWYHI (107 aa)) is the Fe2OG dioxygenase domain. The Fe cation site is built by His-159 and Asp-161. Tyr-173 serves as a coordination point for 2-oxoglutarate. Residue His-227 participates in Fe cation binding. Arg-238 lines the 2-oxoglutarate pocket. Phosphoserine is present on Ser-607.

Belongs to the TPA1 family. In terms of assembly, monomer and homodimer. Interacts with FRK1, eRF1 (SUP1), eRF3 (SUP35) and polyadenylate-binding protein PAB1. Interacts with ETT1. Requires Fe(2+) as cofactor. L-ascorbate serves as cofactor.

Its subcellular location is the nucleus. The catalysed reaction is [ribosomal protein uS12]-L-proline + 2-oxoglutarate + O2 = [ribosomal protein uS12]-(3S)-3-hydroxy-L-proline + succinate + CO2. It carries out the reaction [ribosomal protein uS12]-(3S)-3-hydroxy-L-proline + 2-oxoglutarate + O2 = [ribosomal protein uS12]-(3S)-3,4-dihydroxy-L-proline + succinate + CO2. Prolyl 3,4-dihydroxylase that catalyzes 3,4-dihydroxylation of 'Pro-64' of small ribosomal subunit uS12 (RPS23A and RPS23B), thereby regulating protein translation termination efficiency. Part of a messenger ribonucleoprotein (mRNP) complex at the 3'-UTR of mRNAs. It associates specifically with components of the translation termination complex and is involved in both translation termination and in regulation of normal mRNA decay through translation termination-coupled poly(A) shortening. This chain is Prolyl 3,4-dihydroxylase TPA1, found in Saccharomyces cerevisiae (strain ATCC 204508 / S288c) (Baker's yeast).